A 391-amino-acid polypeptide reads, in one-letter code: MFKSPFGANANPFGGASDGATVGGNAMHQVIEEEENDTVTSPTSPNFGMNAQSMFSGPFGGDASDDVLPSALRSPPNPESYPAQYNFSRRTSVSAESLKPSADTYDNWTPPVHDKTNEQLSRLKTAIAGNFLFSHLDDEQSAQILGALIEKPIPAKDIKVISQGDAGDYFYVVEKGSFDVYVNEKGTLQPGPEGMGEKVGTIQAGGSFGELALMYNAPRAATVISAEPGCTLWALDRLTFRRILMESTFSRRRMYEDFLREVPLLQTLTPYERSKIADALETQKYTPGATIIKEGDPGHSFYLLESGEADAYLGDGKESVKHYSKGDFFGELALLNDAPRAASIVATTDVKVASLGKSAFQRLLGPVEGIMRRTKYDDIKTGVEEMDPLQV.

Residues 1 to 84 (MFKSPFGANA…PPNPESYPAQ (84 aa)) form a disordered region. The segment at 1–131 (MFKSPFGANA…RLKTAIAGNF (131 aa)) is dimerization and phosphorylation. The span at 38-55 (TVTSPTSPNFGMNAQSMF) shows a compositional bias: polar residues. Ser-92 carries the phosphoserine modification. Residues 132-261 (LFSH…FLRE), Glu-210, Arg-219, 264-381 (LLQT…DIKT), Glu-331, and Arg-340 contribute to the 3',5'-cyclic AMP site.

This sequence belongs to the cAMP-dependent kinase regulatory chain family. Tetramer, composed of 2 regulatory (R) and 2 catalytic (C) subunits. In the presence of cAMP it dissociates into 2 active monomeric C subunits and an R dimer.

This chain is cAMP-dependent protein kinase regulatory subunit (PKAR), found in Colletotrichum orbiculare (strain 104-T / ATCC 96160 / CBS 514.97 / LARS 414 / MAFF 240422) (Cucumber anthracnose fungus).